The primary structure comprises 814 residues: Protein kinase C-binding protein NELL2 (814 aa).

Residues Met-1–Gly-19 form the signal peptide. 3 N-linked (GlcNAc...) asparagine glycosylation sites follow: Asn-51, Asn-223, and Asn-296. Positions Ser-53–Cys-226 constitute a Laminin G-like domain. Positions Arg-270–Gln-329 constitute a VWFC 1 domain. The EGF-like 1 domain occupies Gly-395–Glu-437. Disulfide bonds link Cys-399–Cys-411, Cys-405–Cys-420, and Cys-422–Cys-436. The Ca(2+) site is built by Asp-438, Ile-439, and Glu-441. Residues Asp-438–Thr-479 enclose the EGF-like 2; calcium-binding domain. Cystine bridges form between Cys-442-Cys-455, Cys-449-Cys-464, Cys-466-Cys-478, Cys-484-Cys-497, Cys-491-Cys-506, Cys-508-Cys-519, Cys-523-Cys-533, Cys-527-Cys-539, and Cys-541-Cys-550. Ca(2+)-binding residues include Asn-457, Thr-458, and Ser-461. Residues Glu-480–Lys-520 form the EGF-like 3; calcium-binding domain. Residue Asn-515 is glycosylated (N-linked (GlcNAc...) asparagine). An EGF-like 4 domain is found at Ala-521–Glu-551. Ca(2+) is bound by residues Asp-553, Ile-554, and Glu-556. The EGF-like 5; calcium-binding domain occupies Asp-553 to Glu-599. Disulfide bonds link Cys-557/Cys-570, Cys-564/Cys-579, and Cys-581/Cys-598. Ca(2+) is bound by residues Asn-572, Leu-573, and Trp-576. Ca(2+) is bound by residues Asp-600, Ile-601, and Glu-603. The EGF-like 6; calcium-binding domain maps to Asp-600–Ser-635. Intrachain disulfides connect Cys-604–Cys-617, Cys-611–Cys-626, and Cys-628–Cys-634. The N-linked (GlcNAc...) asparagine glycan is linked to Asn-613. Ca(2+) is bound by residues Asn-619, Leu-620, and Gly-623. Asn-633 carries N-linked (GlcNAc...) asparagine glycosylation. VWFC domains lie at Gly-636–Asp-691 and Ser-696–Ile-754.

In terms of assembly, homotrimer.

Its subcellular location is the secreted. May regulate neuronal differentiation, polarization and axon guidance. The polypeptide is Protein kinase C-binding protein NELL2 (nell2) (Xenopus tropicalis (Western clawed frog)).